The following is a 3515-amino-acid chain: Microtubule-actin cross-linking factor 1, isoforms 6/7 (3515 aa).

7 disordered regions span residues 1 to 23 (MGKP…KGEE), 108 to 136 (VQKS…WKSF), 155 to 196 (VSEA…TLEH), 965 to 1178 (TEED…AVPT), 1217 to 1298 (SPAA…SPAA), 1710 to 1730 (EELA…QFQQ), and 3078 to 3108 (PTHA…ILSQ). Positions 120-129 (PNAERKDNVN) are enriched in basic and acidic residues. The interval 157 to 245 (EAGASNPSLQ…ESEAVATSGN (89 aa)) is 13 X 13 AA approximate tandem repeat of P-T-S-P-A-A-A-V-P-T-P-E-E. Low complexity-rich tracts occupy residues 995–1031 (STPE…SPAA) and 1040–1139 (TSPA…AVPT). 13 repeat units span residues 1012–1024 (EPTS…PTPE), 1026–1037 (PTSPAAAVPPPE), 1038–1051 (EPTS…TPEE), 1052–1064 (PTSP…TPEE), 1065–1077 (PTSP…TPEE), 1078–1090 (PTSP…TPEE), 1091–1103 (PTSP…TPEE), 1104–1116 (PTSP…TPEE), 1117–1129 (PASP…TPEE), 1130–1142 (PASP…TPEE), 1143–1155 (PAFP…TPEE), 1156–1168 (SASA…TPEE), and 1169–1178 (SASPAAAVPT). The segment covering 1140 to 1151 (PEEPAFPAPAVP) has biased composition (pro residues). Low complexity-rich tracts occupy residues 1162–1178 (AVPT…AVPT) and 1268–1298 (SSPA…SPAA). Residues 1715–1730 (SGGQSPTGEQIPQFQQ) show a composition bias toward polar residues. 2 EF-hand domains span residues 3168 to 3203 (HKKS…SKFP) and 3204 to 3239 (TTKL…NKDA). The Ca(2+) site is built by Asp-3181, Asp-3183, Asp-3185, Lys-3187, Glu-3192, Asp-3217, Asp-3219, Asp-3221, Tyr-3223, and Glu-3228. One can recognise a GAR domain in the interval 3244-3316 (TDADKIEDEV…EFLVKNDPCR (73 aa)). The tract at residues 3332–3515 (PEGASQGMTP…ASPRTPGPKR (184 aa)) is disordered. Positions 3352–3386 (SSRAASPTRSSSSASQSNHSCTSMPSSPATPASGT) are enriched in low complexity. Over residues 3402–3426 (TFHSSRTSLAGDTSNSSSPASTGAK) the composition is skewed to polar residues. Over residues 3437-3451 (SRPGSRAGSRAGSRA) the composition is skewed to low complexity. Positions 3466–3488 (ETQSACSDTSESSAAGGQGNSRR) are enriched in polar residues.

The protein resides in the cytoplasm. Its subcellular location is the cytoskeleton. The protein is Microtubule-actin cross-linking factor 1, isoforms 6/7 of Homo sapiens (Human).